The primary structure comprises 211 residues: Outer-membrane lipoprotein carrier protein (211 aa).

An N-terminal signal peptide occupies residues 1–24 (MNTIKILIGLLGIFLFSLSGIVSA).

It belongs to the LolA family. As to quaternary structure, monomer.

It localises to the periplasm. Its function is as follows. Participates in the translocation of lipoproteins from the inner membrane to the outer membrane. Only forms a complex with a lipoprotein if the residue after the N-terminal Cys is not an aspartate (The Asp acts as a targeting signal to indicate that the lipoprotein should stay in the inner membrane). The polypeptide is Outer-membrane lipoprotein carrier protein (Coxiella burnetii (strain RSA 331 / Henzerling II)).